Here is a 209-residue protein sequence, read N- to C-terminus: Hydrogenase expression/formation protein HupM (209 aa).

The Ni(2+) site is built by Glu-21, Asp-67, and His-98.

This sequence belongs to the peptidase A31 family.

Functionally, not known. Could be involved in the processing of hydrogenase. This Azotobacter chroococcum mcd 1 protein is Hydrogenase expression/formation protein HupM (hupM).